The sequence spans 93 residues: Small ribosomal subunit protein uS19 (93 aa).

Belongs to the universal ribosomal protein uS19 family.

Its function is as follows. Protein S19 forms a complex with S13 that binds strongly to the 16S ribosomal RNA. This chain is Small ribosomal subunit protein uS19, found in Clostridium acetobutylicum (strain ATCC 824 / DSM 792 / JCM 1419 / IAM 19013 / LMG 5710 / NBRC 13948 / NRRL B-527 / VKM B-1787 / 2291 / W).